The primary structure comprises 418 residues: AP-3 complex subunit mu-1 (418 aa).

Residues 176–417 enclose the MHD domain; that stretch reads NNEAYFDVVE…VTKAGKFQVR (242 aa).

The protein belongs to the adaptor complexes medium subunit family. Adaptor protein complex 3 (AP-3) is a heterotetramer composed of two large adaptins (delta-type subunit AP3D1 and beta-type subunit AP3B1 or AP3B2), a medium adaptin (mu-type subunit AP3M1 or AP3M2) and a small adaptin (sigma-type subunit APS1 or AP3S2). Interacts with AGAP1. AP-3 associates with the BLOC-1 complex.

The protein localises to the golgi apparatus. It is found in the cytoplasmic vesicle membrane. Part of the AP-3 complex, an adaptor-related complex which is not clathrin-associated. The complex is associated with the Golgi region as well as more peripheral structures. It facilitates the budding of vesicles from the Golgi membrane and may be directly involved in trafficking to lysosomes. In concert with the BLOC-1 complex, AP-3 is required to target cargos into vesicles assembled at cell bodies for delivery into neurites and nerve terminals. This is AP-3 complex subunit mu-1 (Ap3m1) from Mus musculus (Mouse).